The following is a 355-amino-acid chain: UDP-N-acetylglucosamine--N-acetylmuramyl-(pentapeptide) pyrophosphoryl-undecaprenol N-acetylglucosamine transferase (355 aa).

Residues 15-17 (TGG), N127, R163, S191, I244, 263-268 (ALTVSE), and Q288 each bind UDP-N-acetyl-alpha-D-glucosamine.

The protein belongs to the glycosyltransferase 28 family. MurG subfamily.

It is found in the cell inner membrane. The enzyme catalyses di-trans,octa-cis-undecaprenyl diphospho-N-acetyl-alpha-D-muramoyl-L-alanyl-D-glutamyl-meso-2,6-diaminopimeloyl-D-alanyl-D-alanine + UDP-N-acetyl-alpha-D-glucosamine = di-trans,octa-cis-undecaprenyl diphospho-[N-acetyl-alpha-D-glucosaminyl-(1-&gt;4)]-N-acetyl-alpha-D-muramoyl-L-alanyl-D-glutamyl-meso-2,6-diaminopimeloyl-D-alanyl-D-alanine + UDP + H(+). It functions in the pathway cell wall biogenesis; peptidoglycan biosynthesis. Functionally, cell wall formation. Catalyzes the transfer of a GlcNAc subunit on undecaprenyl-pyrophosphoryl-MurNAc-pentapeptide (lipid intermediate I) to form undecaprenyl-pyrophosphoryl-MurNAc-(pentapeptide)GlcNAc (lipid intermediate II). The polypeptide is UDP-N-acetylglucosamine--N-acetylmuramyl-(pentapeptide) pyrophosphoryl-undecaprenol N-acetylglucosamine transferase (Salmonella newport (strain SL254)).